Here is a 188-residue protein sequence, read N- to C-terminus: Elongation factor P (188 aa).

Lysine 34 is modified (N6-(3,6-diaminohexanoyl)-5-hydroxylysine).

The protein belongs to the elongation factor P family. May be beta-lysylated on the epsilon-amino group of Lys-34 by the combined action of EpmA and EpmB, and then hydroxylated on the C5 position of the same residue by EpmC (if this protein is present). Lysylation is critical for the stimulatory effect of EF-P on peptide-bond formation. The lysylation moiety may extend toward the peptidyltransferase center and stabilize the terminal 3-CCA end of the tRNA. Hydroxylation of the C5 position on Lys-34 may allow additional potential stabilizing hydrogen-bond interactions with the P-tRNA.

It localises to the cytoplasm. It functions in the pathway protein biosynthesis; polypeptide chain elongation. Functionally, involved in peptide bond synthesis. Alleviates ribosome stalling that occurs when 3 or more consecutive Pro residues or the sequence PPG is present in a protein, possibly by augmenting the peptidyl transferase activity of the ribosome. Modification of Lys-34 is required for alleviation. The protein is Elongation factor P of Xanthomonas axonopodis pv. citri (strain 306).